Consider the following 299-residue polypeptide: YjeF N-terminal domain-containing protein 3 (299 aa).

The region spanning 74–287 is the YjeF N-terminal domain; sequence AAALERELLE…DVRRKFALRL (214 aa).

As to quaternary structure, interacts with APOA1. Binds to HDL. As to expression, expressed in theca cells in ovary and in Leydig cells in testis (at protein level). Also expressed in brain and mammary gland.

In terms of biological role, may accelerate cholesterol efflux from endothelial cells to high-density lipoprotein (HDL) and thereby regulates angiogenesis. May orchestrate hematopoietic stem and progenitor cell emergence from the hemogenic endothelium, a type of specialized endothelium manifesting hematopoietic potential. YJEFN3-mediated cholesterol efflux activates endothelial SREBF2, the master transcription factor for cholesterol biosynthesis, which in turn transactivates NOTCH and promotes hematopoietic stem and progenitor cell emergence. May play a role in spermiogenesis and oogenesis. This is YjeF N-terminal domain-containing protein 3 (YJEFN3) from Homo sapiens (Human).